The chain runs to 473 residues: H(+)/Cl(-) exchange transporter ClcA (473 aa).

The Cytoplasmic portion of the chain corresponds to 1 to 32; that stretch reads MKTDTSTFLAQQIVRLRRRDQIRRLMQRDKTP. The chain crosses the membrane as a helical span at residues 33–69; the sequence is LAILFMAAVVGTLTGLVGVAFEKAVSWVQNMRIGALV. Over 70 to 76 the chain is Periplasmic; that stretch reads QVADHAF. Residues 77-100 traverse the membrane as a helical segment; it reads LLWPLAFILSALLAMVGYFLVRKF. Residues 106–110 carry the Selectivity filter part_1 motif; sequence GSGIP. Residue Ser-107 coordinates chloride. The segment at residues 109-116 is an intramembrane region (helical); the sequence is IPEIEGAL. Residues 117–123 lie on the Cytoplasmic side of the membrane; sequence EELRPVR. The next 2 membrane-spanning stretches (helical) occupy residues 124 to 141 and 148 to 166; these read WWRVLPVKFIGGMGTLGA and EGPTVQIGGNLGRMVLDVF. Positions 146–150 match the Selectivity filter part_2 motif; the sequence is GREGP. Residues 167-176 are Cytoplasmic-facing; the sequence is RMRSAEARHT. Intramembrane regions (helical) lie at residues 177–189 and 193–201; these read LLATGAAAGLSAA and PLAGILFII. At 202-214 the chain is on the cytoplasmic side; the sequence is EEMRPQFRYNLIS. Residues 215 to 232 form a helical membrane-spanning segment; that stretch reads IKAVFTGVIMSSIVFRIF. At 233–252 the chain is on the periplasmic side; the sequence is NGEAPIIEVGKLSDAPVNTL. Residues 253–281 form a helical membrane-spanning segment; the sequence is WLYLILGIIFGCVGPVFNSLVLRTQDMFQ. The Cytoplasmic portion of the chain corresponds to 282–287; it reads RFHGGE. A helical transmembrane segment spans residues 288 to 309; it reads IKKWVLMGGAIGGLCGILGLIE. The Periplasmic portion of the chain corresponds to 310 to 329; sequence PEAAGGGFNLIPIAAAGNFS. 2 helical membrane-spanning segments follow: residues 330–349 and 355–376; these read VGLLLFIFITRVVTTLLCFS and GIFAPMLALGTLLGTAFGMAAA. Positions 355–359 match the Selectivity filter part_3 motif; it reads GIFAP. Chloride contacts are provided by Ile-356 and Phe-357. Residues 377–386 are Periplasmic-facing; sequence VLFPQYHLEA. The helical intramembrane region spans 387–401; sequence GTFAIAGMGALMAAS. Residues 402-404 constitute an intramembrane region (note=Loop between two helices); it reads VRA. The segment at residues 405 to 416 is an intramembrane region (helical); it reads PLTGIVLVLEMT. Positions 417–421 form an intramembrane region, note=Loop between two helices; the sequence is DNYQL. A helical membrane pass occupies residues 422 to 438; sequence ILPMIITCLGATLLAQF. At 439-473 the chain is on the cytoplasmic side; the sequence is LGGKPLYSTILARTLAKQDAEQAAKNQNASAGENT. Tyr-445 contributes to the chloride binding site.

This sequence belongs to the chloride channel (TC 2.A.49) family. ClcA subfamily. As to quaternary structure, homodimer.

Its subcellular location is the cell inner membrane. The catalysed reaction is 2 chloride(in) + H(+)(out) = 2 chloride(out) + H(+)(in). In terms of biological role, proton-coupled chloride transporter. Functions as antiport system and exchanges two chloride ions for 1 proton. Probably acts as an electrical shunt for an outwardly-directed proton pump that is linked to amino acid decarboxylation, as part of the extreme acid resistance (XAR) response. The chain is H(+)/Cl(-) exchange transporter ClcA from Salmonella choleraesuis (strain SC-B67).